A 471-amino-acid polypeptide reads, in one-letter code: Bifunctional protein GlmU (471 aa).

The pyrophosphorylase stretch occupies residues 1 to 232 (MSDITAVLLA…EEDALAPNDR (232 aa)). Residues 9-12 (LAAG), Lys23, Gln73, 78-79 (GT), 102-104 (YGD), Gly141, Glu157, and Asn230 contribute to the UDP-N-acetyl-alpha-D-glucosamine site. Residue Asp104 participates in Mg(2+) binding. A Mg(2+)-binding site is contributed by Asn230. The segment at 233–253 (VELARAEARLRRQINERHMRN) is linker. Residues 254–471 (GVTIINPDAT…RQRKMNREGT (218 aa)) are N-acetyltransferase. UDP-N-acetyl-alpha-D-glucosamine is bound by residues Arg335 and Lys353. The active-site Proton acceptor is the His365. Residues Tyr368 and Asn379 each coordinate UDP-N-acetyl-alpha-D-glucosamine. Acetyl-CoA-binding positions include Ala382, 388–389 (NY), Ala425, and Arg444.

The protein in the N-terminal section; belongs to the N-acetylglucosamine-1-phosphate uridyltransferase family. In the C-terminal section; belongs to the transferase hexapeptide repeat family. Homotrimer. The cofactor is Mg(2+).

The protein localises to the cytoplasm. The catalysed reaction is alpha-D-glucosamine 1-phosphate + acetyl-CoA = N-acetyl-alpha-D-glucosamine 1-phosphate + CoA + H(+). The enzyme catalyses N-acetyl-alpha-D-glucosamine 1-phosphate + UTP + H(+) = UDP-N-acetyl-alpha-D-glucosamine + diphosphate. Its pathway is nucleotide-sugar biosynthesis; UDP-N-acetyl-alpha-D-glucosamine biosynthesis; N-acetyl-alpha-D-glucosamine 1-phosphate from alpha-D-glucosamine 6-phosphate (route II): step 2/2. It functions in the pathway nucleotide-sugar biosynthesis; UDP-N-acetyl-alpha-D-glucosamine biosynthesis; UDP-N-acetyl-alpha-D-glucosamine from N-acetyl-alpha-D-glucosamine 1-phosphate: step 1/1. The protein operates within bacterial outer membrane biogenesis; LPS lipid A biosynthesis. Functionally, catalyzes the last two sequential reactions in the de novo biosynthetic pathway for UDP-N-acetylglucosamine (UDP-GlcNAc). The C-terminal domain catalyzes the transfer of acetyl group from acetyl coenzyme A to glucosamine-1-phosphate (GlcN-1-P) to produce N-acetylglucosamine-1-phosphate (GlcNAc-1-P), which is converted into UDP-GlcNAc by the transfer of uridine 5-monophosphate (from uridine 5-triphosphate), a reaction catalyzed by the N-terminal domain. This is Bifunctional protein GlmU from Symbiobacterium thermophilum (strain DSM 24528 / JCM 14929 / IAM 14863 / T).